The sequence spans 82 residues: MVTIRLQRGGAKKRPFYQVVVADSRNARDGRFIERVGFFNPVASGNAEKLNLDLARIEHWVGTGAAVSDRVAKLIKDAAKAA.

The protein belongs to the bacterial ribosomal protein bS16 family.

In Aeromonas hydrophila subsp. hydrophila (strain ATCC 7966 / DSM 30187 / BCRC 13018 / CCUG 14551 / JCM 1027 / KCTC 2358 / NCIMB 9240 / NCTC 8049), this protein is Small ribosomal subunit protein bS16.